The sequence spans 211 residues: Outer-membrane lipoprotein carrier protein (211 aa).

An N-terminal signal peptide occupies residues 1–24 (MNTIKILIGLLGIFLFSLSGIVSA).

Belongs to the LolA family. As to quaternary structure, monomer.

The protein resides in the periplasm. Its function is as follows. Participates in the translocation of lipoproteins from the inner membrane to the outer membrane. Only forms a complex with a lipoprotein if the residue after the N-terminal Cys is not an aspartate (The Asp acts as a targeting signal to indicate that the lipoprotein should stay in the inner membrane). This is Outer-membrane lipoprotein carrier protein from Coxiella burnetii (strain RSA 331 / Henzerling II).